We begin with the raw amino-acid sequence, 166 residues long: Ubiquitin-fold modifier-conjugating enzyme 1 (166 aa).

The active-site Glycyl thioester intermediate is the Cys116.

Belongs to the ubiquitin-conjugating enzyme family. UFC1 subfamily. In terms of assembly, interacts with UBA5 (via C-terminus). Interacts with UFL1. Interacts with UFM1.

E2-like enzyme which specifically catalyzes the second step in ufmylation. Accepts the ubiquitin-like modifier UFM1 from the E1 enzyme UBA5 and forms an intermediate with UFM1 via a thioester linkage. Ufmylation is involved in various processes, such as ribosome recycling, response to DNA damage, interferon response or reticulophagy (also called ER-phagy). The polypeptide is Ubiquitin-fold modifier-conjugating enzyme 1 (ufc1) (Danio rerio (Zebrafish)).